The following is a 202-amino-acid chain: MKEYNIVITGVGGQGILTAANLLGWAALRAGYKVRVGEVHGMSQRFGSVIAYVRFGEDVYGAMVPEGKADVILSFEPVEALRYINYLKKGGLVFTNARPIPPVQVSMGLATYPTLDEMKKIVEEDFGGKFMAFDAEKLAMEAGNIVTTNVVLIGALSQTPGFPLSEEQIKEVIRISVPPKTIDVNMRAFELGVKAAKEMLGL.

In terms of assembly, heterodimer of the IorA and IorB subunits.

It catalyses the reaction indole-3-pyruvate + 2 oxidized [2Fe-2S]-[ferredoxin] + CoA = (indol-3-yl)acetyl-CoA + 2 reduced [2Fe-2S]-[ferredoxin] + CO2 + H(+). In terms of biological role, catalyzes the ferredoxin-dependent oxidative decarboxylation of arylpyruvates. This is Indolepyruvate oxidoreductase subunit IorB (iorB) from Thermococcus kodakarensis (strain ATCC BAA-918 / JCM 12380 / KOD1) (Pyrococcus kodakaraensis (strain KOD1)).